The chain runs to 157 residues: UPF0251 protein CLD_3165 (157 aa).

This sequence belongs to the UPF0251 family.

The polypeptide is UPF0251 protein CLD_3165 (Clostridium botulinum (strain Okra / Type B1)).